Reading from the N-terminus, the 359-residue chain is Probable dual-specificity RNA methyltransferase RlmN (359 aa).

Glu91 functions as the Proton acceptor in the catalytic mechanism. The region spanning Gln97–Arg329 is the Radical SAM core domain. Cys104 and Cys340 form a disulfide bridge. [4Fe-4S] cluster-binding residues include Cys111, Cys115, and Cys118. Residues Gly163–Glu164, Ser195, Ser218–His220, and Asn296 each bind S-adenosyl-L-methionine. The S-methylcysteine intermediate role is filled by Cys340.

It belongs to the radical SAM superfamily. RlmN family. [4Fe-4S] cluster is required as a cofactor.

It localises to the cytoplasm. It catalyses the reaction adenosine(2503) in 23S rRNA + 2 reduced [2Fe-2S]-[ferredoxin] + 2 S-adenosyl-L-methionine = 2-methyladenosine(2503) in 23S rRNA + 5'-deoxyadenosine + L-methionine + 2 oxidized [2Fe-2S]-[ferredoxin] + S-adenosyl-L-homocysteine. The enzyme catalyses adenosine(37) in tRNA + 2 reduced [2Fe-2S]-[ferredoxin] + 2 S-adenosyl-L-methionine = 2-methyladenosine(37) in tRNA + 5'-deoxyadenosine + L-methionine + 2 oxidized [2Fe-2S]-[ferredoxin] + S-adenosyl-L-homocysteine. Specifically methylates position 2 of adenine 2503 in 23S rRNA and position 2 of adenine 37 in tRNAs. This chain is Probable dual-specificity RNA methyltransferase RlmN, found in Streptococcus pyogenes serotype M2 (strain MGAS10270).